A 329-amino-acid chain; its full sequence is U5 small nuclear ribonucleoprotein TSSC4 (329 aa).

Disordered stretches follow at residues 1–88 and 104–156; these read MAEA…MSST and ARRA…PDYV. The span at 22 to 41 shows a compositional bias: low complexity; the sequence is DTLPSDTVSLSDSDSDLSLP. Phosphoserine is present on residues S60, S67, S86, S132, S143, and S146. A hom2; mediates interaction with the U5 snRNP complexes and required for spliceosomal tri-snRNP complex assembly region spans residues 77-104; the sequence is VQPFHLRGMSSTFSQRSRDIFDCLEGAA. Positions 149–316 are interaction with SNRNP200; that stretch reads VPPVPDYVAH…SRKRSRDHFR (168 aa). The segment at 150 to 186 is hom3; mediates interaction with the U5 snRNP complexes; it reads PPVPDYVAHPERWTKYSLEDVTEVSEQSNQATALAFL. Residues 201–250 are hom4; necessary for interaction with the PRPF19 complex and required for spliceosomal tri-snRNP complex assembly; the sequence is FNQDPSSCGEGRVIFTKPVRGVEARHERKRVLGKVGEPGRGGLGNPATDR. The residue at position 217 (K217) is an N6-acetyllysine. The interval 221-329 is disordered; it reads GVEARHERKR…SSPEDPGAEV (109 aa). S265 carries the post-translational modification Phosphoserine. Residues 306–317 are compositionally biased toward basic residues; sequence GSRKRSRDHFRN. S321 is modified (phosphoserine).

This sequence belongs to the TSSC4 family. In terms of assembly, interacts in a RNA-independent manner with distinct U5 snRNP-containing complexes, the mono-U5 snRNP and the post-splicing U5 snRNP-PRPF19 complex. Interacts with SNRNP200; the interaction is direct, excludes recruitment of C9ORF78 and WBP4 to SNRNP200 and negatively regulates its RNA helicase activity. Interacts with PRPF8; the interaction is direct. As to expression, expressed in fetal brain, lung, liver and kidney. Widely expressed in adult tissues.

The protein localises to the nucleus. It is found in the cytoplasm. Its function is as follows. Protein associated with the U5 snRNP, during its maturation and its post-splicing recycling and which is required for spliceosomal tri-snRNP complex assembly in the nucleus. Has a molecular sequestering activity and transiently hinders SNRNP200 binding sites for constitutive splicing factors that intervene later during the assembly of the spliceosome and splicing. Together with its molecular sequestering activity, may also function as a molecular adapter and placeholder, coordinating the assembly of the U5 snRNP and its association with the U4/U6 di-snRNP. This is U5 small nuclear ribonucleoprotein TSSC4 from Homo sapiens (Human).